We begin with the raw amino-acid sequence, 168 residues long: SsrA-binding protein (168 aa).

A disordered region spans residues 1–20; sequence MAAQSKQAKPSGKQGGKKII.

This sequence belongs to the SmpB family.

It is found in the cytoplasm. In terms of biological role, required for rescue of stalled ribosomes mediated by trans-translation. Binds to transfer-messenger RNA (tmRNA), required for stable association of tmRNA with ribosomes. tmRNA and SmpB together mimic tRNA shape, replacing the anticodon stem-loop with SmpB. tmRNA is encoded by the ssrA gene; the 2 termini fold to resemble tRNA(Ala) and it encodes a 'tag peptide', a short internal open reading frame. During trans-translation Ala-aminoacylated tmRNA acts like a tRNA, entering the A-site of stalled ribosomes, displacing the stalled mRNA. The ribosome then switches to translate the ORF on the tmRNA; the nascent peptide is terminated with the 'tag peptide' encoded by the tmRNA and targeted for degradation. The ribosome is freed to recommence translation, which seems to be the essential function of trans-translation. In Mycobacterium ulcerans (strain Agy99), this protein is SsrA-binding protein.